The sequence spans 506 residues: MTQAVMLQGTASDVGKSVLVAGLCRIFYQDGLRTAPFKSQNMALNSGITPDGKEMGRAQIFQAEAAGIAPDVRMNPVLLKPTSDRKAQVVLMGKVATDMDAVSYHEYKPRLREQILTVYNSLAQEYDVLVLEGAGSPAEINLRDRDIVNMGMAEMAQCPVILVADIDRGGVFASIYGTLALLHDSERARVKGVIINKFRGDVTLLYSGIEQIEALTGVPVLGVMPWLEVDLEDEDGVALQKGKYLRTDKRDIDIAVVQVPHISNFTDFNALAAQPDVRVRYVRHPEELAGADLIILPGSKNTLGDLVWLRESAMAHGVLQAHRQGVPVAGICGGYQMLGDTIIDEVESGLGTLPGLGLLNTVTHFAQDKTTTQVEGQMASALPGWLAAASGLAVRGYEIHMGETTLNAQCQPAMTLRKGENAIADGAVTDDGLVFGTYLHGLFDSDAFTRALVNGLRVRKGLTPLDHAFHYAQYKSQQFDLLADAMRQHIDIEKIYTIMQQHREPV.

One can recognise a GATase cobBQ-type domain in the interval 251–448 (DIDIAVVQVP…LHGLFDSDAF (198 aa)). Residue C332 is the Nucleophile of the active site. H440 is an active-site residue.

This sequence belongs to the CobB/CobQ family. CobQ subfamily.

It participates in cofactor biosynthesis; adenosylcobalamin biosynthesis. Catalyzes amidations at positions B, D, E, and G on adenosylcobyrinic A,C-diamide. NH(2) groups are provided by glutamine, and one molecule of ATP is hydrogenolyzed for each amidation. This chain is Cobyric acid synthase, found in Citrobacter koseri (strain ATCC BAA-895 / CDC 4225-83 / SGSC4696).